A 196-amino-acid chain; its full sequence is Heat shock protein beta-8 (196 aa).

A disordered region spans residues 1–28 (MADGQLPFPCSYPSRLRRDPFRDSPLSS). 2 positions are modified to phosphoserine: Ser-24 and Ser-57. The residue at position 63 (Thr-63) is a Phosphothreonine. An asymmetric dimethylarginine mark is found at Arg-71 and Arg-78. The sHSP domain occupies 78-185 (RFGVPAEGRS…PFGESSFNNE (108 aa)). Residue Ser-87 is modified to Phosphoserine. A disordered region spans residues 176-196 (PFGESSFNNELPQDNQEVTCS). A compositionally biased stretch (polar residues) spans 178 to 196 (GESSFNNELPQDNQEVTCS).

Belongs to the small heat shock protein (HSP20) family. Monomer. Forms a ternary complex with BAG3 and HSPA1A. Component of the chaperone-assisted selective autophagy (CASA) complex consisting of BAG3, HSPA8/HSC70, HSPB8 and STUB1/CHIP. Interacts with HSPB1. Interacts with DNAJB6. Interacts with BAG3. As to expression, highly expressed in skeletal muscle, heart, uterus, liver, lung and ovary. Low levels found in stomach and brain. Not detected in small intestine, large intestine, kidney, spleen and testis. In the ovary, expression is concentrated in the endometrium and in the connective tissue between the circular and longitudinal muscles of the myometrium.

It localises to the cytoplasm. Its subcellular location is the nucleus. Involved in the chaperone-assisted selective autophagy (CASA), a crucial process for protein quality control, particularly in mechanical strained cells and tissues such as muscle. Displays temperature-dependent chaperone activity. In Mus musculus (Mouse), this protein is Heat shock protein beta-8 (Hspb8).